We begin with the raw amino-acid sequence, 354 residues long: DNA polymerase IV (354 aa).

One can recognise a UmuC domain in the interval 6–187 (IIHVDCDCFY…LPVARLHGVG (182 aa)). Residues D10 and D105 each coordinate Mg(2+). The active site involves E106.

It belongs to the DNA polymerase type-Y family. As to quaternary structure, monomer. Mg(2+) serves as cofactor.

It is found in the cytoplasm. It carries out the reaction DNA(n) + a 2'-deoxyribonucleoside 5'-triphosphate = DNA(n+1) + diphosphate. In terms of biological role, poorly processive, error-prone DNA polymerase involved in untargeted mutagenesis. Copies undamaged DNA at stalled replication forks, which arise in vivo from mismatched or misaligned primer ends. These misaligned primers can be extended by PolIV. Exhibits no 3'-5' exonuclease (proofreading) activity. May be involved in translesional synthesis, in conjunction with the beta clamp from PolIII. The chain is DNA polymerase IV from Pseudomonas putida (strain ATCC 700007 / DSM 6899 / JCM 31910 / BCRC 17059 / LMG 24140 / F1).